The primary structure comprises 247 residues: Protein NipSnap homolog 3B (247 aa).

N6-succinyllysine is present on residues Lys-45, Lys-48, Lys-57, and Lys-166.

It belongs to the NipSnap family.

The protein resides in the cytoplasm. It is found in the cytosol. In Mus musculus (Mouse), this protein is Protein NipSnap homolog 3B (Nipsnap3b).